Here is a 143-residue protein sequence, read N- to C-terminus: uncharacterized protein (143 aa).

This is an uncharacterized protein from Saccharomyces cerevisiae (strain ATCC 204508 / S288c) (Baker's yeast).